A 229-amino-acid polypeptide reads, in one-letter code: MFLVGLTGGIASGKSTVSSQLKELGCPVIDADVVARKVVEPQTAAYRLIVRHFGQEVLSENGEIDRKKLGQIIFSSPEKRRLLNSITHPEIHKEMLKQILLYFIKGYRYVILNVPLLFETRRLTRFLTHTVVVYCDPATQLSRLMQRDALSQTEAEQRISAQMPLKEKRGLANHVIENSGSREDTHRQVLRLHSKLDDCMQFLIIRAVAVAALTGLGGLFIYTVKIITS.

A DPCK domain is found at 3–207 (LVGLTGGIAS…DCMQFLIIRA (205 aa)). 8 to 15 (GGIASGKS) provides a ligand contact to ATP.

The protein belongs to the CoaE family.

This is Dephospho-CoA kinase domain-containing protein (dcakd) from Danio rerio (Zebrafish).